The sequence spans 206 residues: Ribonuclease HII (206 aa).

The region spanning 14-206 (EFICGIDEVG…FKLRQLGEKV (193 aa)) is the RNase H type-2 domain. The a divalent metal cation site is built by Asp-20, Glu-21, and Asp-117.

It belongs to the RNase HII family. Mn(2+) is required as a cofactor. The cofactor is Mg(2+).

It is found in the cytoplasm. The catalysed reaction is Endonucleolytic cleavage to 5'-phosphomonoester.. Its function is as follows. Endonuclease that specifically degrades the RNA of RNA-DNA hybrids. The chain is Ribonuclease HII from Chlorobium chlorochromatii (strain CaD3).